A 1368-amino-acid polypeptide reads, in one-letter code: DNA-directed RNA polymerase subunit beta (1368 aa).

This sequence belongs to the RNA polymerase beta chain family. In terms of assembly, the RNAP catalytic core consists of 2 alpha, 1 beta, 1 beta' and 1 omega subunit. When a sigma factor is associated with the core the holoenzyme is formed, which can initiate transcription.

The enzyme catalyses RNA(n) + a ribonucleoside 5'-triphosphate = RNA(n+1) + diphosphate. Its function is as follows. DNA-dependent RNA polymerase catalyzes the transcription of DNA into RNA using the four ribonucleoside triphosphates as substrates. In Burkholderia ambifaria (strain ATCC BAA-244 / DSM 16087 / CCUG 44356 / LMG 19182 / AMMD) (Burkholderia cepacia (strain AMMD)), this protein is DNA-directed RNA polymerase subunit beta.